Here is an 881-residue protein sequence, read N- to C-terminus: Phosphoenolpyruvate carboxylase (881 aa).

Active-site residues include H138 and K545.

Belongs to the PEPCase type 1 family. Mg(2+) is required as a cofactor.

It catalyses the reaction oxaloacetate + phosphate = phosphoenolpyruvate + hydrogencarbonate. Its function is as follows. Forms oxaloacetate, a four-carbon dicarboxylic acid source for the tricarboxylic acid cycle. In Shewanella oneidensis (strain ATCC 700550 / JCM 31522 / CIP 106686 / LMG 19005 / NCIMB 14063 / MR-1), this protein is Phosphoenolpyruvate carboxylase.